The following is a 300-amino-acid chain: Delta-9 desaturase-like 4 protein (300 aa).

The next 2 helical transmembrane spans lie at 39–59 and 61–81; these read VVVI…WEAL and FGLV…HRNL. Positions 78-83 match the Histidine box-1 motif; sequence HRNLSH. A Histidine box-2 motif is present at residues 115–119; that stretch reads HRFHH. Transmembrane regions (helical) follow at residues 175–195 and 200–220; these read IAVH…LPYL and GVGI…CHIW. Residues 247–251 carry the Histidine box-3 motif; the sequence is HNNHH.

Belongs to the fatty acid desaturase type 1 family. Requires Fe cation as cofactor.

The protein resides in the endoplasmic reticulum membrane. Its pathway is lipid metabolism; polyunsaturated fatty acid biosynthesis. This Arabidopsis thaliana (Mouse-ear cress) protein is Delta-9 desaturase-like 4 protein.